We begin with the raw amino-acid sequence, 316 residues long: Methionyl-tRNA formyltransferase (316 aa).

111–114 (GLLP) provides a ligand contact to (6S)-5,6,7,8-tetrahydrofolate.

Belongs to the Fmt family.

It carries out the reaction L-methionyl-tRNA(fMet) + (6R)-10-formyltetrahydrofolate = N-formyl-L-methionyl-tRNA(fMet) + (6S)-5,6,7,8-tetrahydrofolate + H(+). In terms of biological role, attaches a formyl group to the free amino group of methionyl-tRNA(fMet). The formyl group appears to play a dual role in the initiator identity of N-formylmethionyl-tRNA by promoting its recognition by IF2 and preventing the misappropriation of this tRNA by the elongation apparatus. In Chlamydia trachomatis serovar A (strain ATCC VR-571B / DSM 19440 / HAR-13), this protein is Methionyl-tRNA formyltransferase.